A 210-amino-acid chain; its full sequence is Small ribosomal subunit protein uS3 (210 aa).

One can recognise a KH type-2 domain in the interval 38–106 (IRQFLKKRLY…EVFININEVR (69 aa)).

The protein belongs to the universal ribosomal protein uS3 family. Part of the 30S ribosomal subunit. Forms a tight complex with proteins S10 and S14.

Binds the lower part of the 30S subunit head. Binds mRNA in the 70S ribosome, positioning it for translation. The chain is Small ribosomal subunit protein uS3 from Trichlorobacter lovleyi (strain ATCC BAA-1151 / DSM 17278 / SZ) (Geobacter lovleyi).